The chain runs to 155 residues: MVWDATNIFLFIANILTLLYILYNDAVIPLSKGKTVLSVKLRSRGRWDGYIFVGIIVLLFVSNTFFREGPFSTSVLLAVMGVLFIYICFFRSSKAVFKETGLYYALLFFPYAKIERMNLSEDGVLVIETNRQRLMLFARSEKDLEKMLAVFTTYS.

Transmembrane regions (helical) follow at residues 8–28 (IFLF…DAVI), 46–66 (RWDG…NTFF), and 70–90 (PFST…ICFF).

The protein belongs to the UPF0266 family.

It localises to the cell membrane. In Listeria innocua serovar 6a (strain ATCC BAA-680 / CLIP 11262), this protein is UPF0266 membrane protein lin0773.